The chain runs to 497 residues: MAAAGPGAALSPRRCDSDPASPGAQSPKDDNEDNSNDGGHPSKRRRMGSGDSSRSCETSSQDLSFSYYPAENLIEYKWPPDETGEYYMLQEQVSEYLGVTSFKRKYPDLERRDLSHKEKLYLRELNVITETQCTLGLTALRSDEVIDLMIKEYPAKHAEYSVILQEKERQRITDHYKEYSQMQQQSTQKVEASKVPEYIKKAAKKAAEFNSNLNRERMEERRAYFDLQTHVIQVPQGKYKVLPTDRTKVSSYPVALIPGQFQEYYKRYSPDELRYLPLNTALYEPPLDPELPALDSDGDSDDGEDGGGDEKRKNKGTSDSSSGNVSEGDSPPDSQEDTFQGRQKSKDKMATPRKDGSKRSVLSKSVPGYKPKVIPNALCGICLKGKESNKKGKAESLIHCSQCDNSGHPSCLDMTMELVSMIKTYPWQCMECKTCIICGQPHHEEEMMFCDVCDRGYHTFCVGLGAIPSGRWICDCCQRAPPTPRKVGRRGKNSKEG.

The tract at residues 1–61 (MAAAGPGAAL…SSRSCETSSQ (61 aa)) is disordered. A phosphoserine mark is found at serine 11, serine 35, and serine 49. The essential to induce neural progenitor proliferation stretch occupies residues 88-184 (MLQEQVSEYL…HYKEYSQMQQ (97 aa)). The segment at 88 to 294 (MLQEQVSEYL…PPLDPELPAL (207 aa)) is SAY. Residue lysine 240 forms a Glycyl lysine isopeptide (Lys-Gly) (interchain with G-Cter in SUMO2) linkage. Serine 269 carries the post-translational modification Phosphoserine. Residues 284-295 (EPPLDPELPALD) show a composition bias toward low complexity. The segment at 284 to 367 (EPPLDPELPA…KRSVLSKSVP (84 aa)) is disordered. Residues 291 to 333 (LPALDSDGDSDDGEDGGGDEKRKNKGTSDSSSGNVSEGDSPPD) form an essential to induce neural progenitor proliferation region. Phosphoserine occurs at positions 296, 300, 326, and 330. A compositionally biased stretch (acidic residues) spans 296 to 307 (SDGDSDDGEDGG). Positions 317–327 (TSDSSSGNVSE) are enriched in polar residues. The segment covering 344–358 (KSKDKMATPRKDGSK) has biased composition (basic and acidic residues). The PHD-type 1; degenerate zinc-finger motif lies at 378-435 (LCGICLKGKESNKKGKAESLIHCSQCDNSGHPSCLDMTMELVSMIKTYPWQCMECKTC). Residue lysine 384 forms a Glycyl lysine isopeptide (Lys-Gly) (interchain with G-Cter in SUMO2) linkage. The segment at 437–480 (ICGQPHHEEEMMFCDVCDRGYHTFCVGLGAIPSGRWICDCCQRA) adopts a PHD-type 2; degenerate zinc-finger fold.

This sequence belongs to the SAYP family. Component of neural progenitors-specific chromatin remodeling complex (npBAF complex) composed of at least, ARID1A/BAF250A or ARID1B/BAF250B, SMARCD1/BAF60A, SMARCD3/BAF60C, SMARCA2/BRM/BAF190B, SMARCA4/BRG1/BAF190A, SMARCB1/BAF47, SMARCC1/BAF155, SMARCE1/BAF57, SMARCC2/BAF170, PHF10/BAF45A, ACTL6A/BAF53A and actin. Interacts with ACTL6A/BAF53A, SMARCA2/BRM/BAF190B, SMARCA4/BRG1/BAF190A and PBRM1/BAF180.

Its subcellular location is the nucleus. Functionally, involved in transcription activity regulation by chromatin remodeling. Belongs to the neural progenitors-specific chromatin remodeling complex (npBAF complex) and is required for the proliferation of neural progenitors. During neural development a switch from a stem/progenitor to a post-mitotic chromatin remodeling mechanism occurs as neurons exit the cell cycle and become committed to their adult state. The transition from proliferating neural stem/progenitor cells to post-mitotic neurons requires a switch in subunit composition of the npBAF and nBAF complexes. As neural progenitors exit mitosis and differentiate into neurons, npBAF complexes which contain ACTL6A/BAF53A and PHF10/BAF45A, are exchanged for homologous alternative ACTL6B/BAF53B and DPF1/BAF45B or DPF3/BAF45C subunits in neuron-specific complexes (nBAF). The npBAF complex is essential for the self-renewal/proliferative capacity of the multipotent neural stem cells. The nBAF complex along with CREST plays a role regulating the activity of genes essential for dendrite growth. The chain is PHD finger protein 10 (Phf10) from Rattus norvegicus (Rat).